The sequence spans 832 residues: Sodium/hydrogen exchanger 3 (832 aa).

The N-terminal stretch at 1 to 29 (MGRNRSGCVARCVSLTALVLLLCCPVVRS) is a signal peptide. Over 30 to 66 (SEAETDPDSHTEHGDSHGGSREGNDTGFQIVTFRWEH) the chain is Extracellular. The tract at residues 31-51 (EAETDPDSHTEHGDSHGGSRE) is disordered. Over residues 36–51 (PDSHTEHGDSHGGSRE) the composition is skewed to basic and acidic residues. A helical membrane pass occupies residues 67 to 89 (VQTPYVIALWILVASLGKIVFHL). Over 90–97 (SEKVTSVV) the chain is Cytoplasmic. The chain crosses the membrane as a helical span at residues 98 to 117 (PESALLIVLGLILGGIVWAA). Topologically, residues 118–126 (DHSASFTLT) are extracellular. A helical transmembrane segment spans residues 127-144 (PTVFFFYLLPPIVLDAGY). Residues 145–147 (FMP) are Cytoplasmic-facing. Residues 148-183 (NRHFFGNLGTILTYAVIGTVWNAATTGLSLYGVFLL) traverse the membrane as a helical segment. The a 1,2-diacyl-sn-glycero-3-phospho-(1D-myo-inositol) site is built by G153, G156, and T157. The Extracellular segment spans residues 184–196 (GLMGDLKAGLLEF). Residues 197–218 (LLFGSLIAAVDPVAVLAVFEEV) form a helical membrane-spanning segment. The Cytoplasmic segment spans residues 219–220 (HV). A helical transmembrane segment spans residues 221-252 (NEVLFIIVFGESLLNDAVTVVLYNVFNSFVEV). Residues 253–259 (GAGNVQG) are Extracellular-facing. Residues 260 to 294 (LDYFKGIVSFFVVSLGGTAVGIIFAFILSLVTRFT) traverse the membrane as a helical segment. Residues 295–296 (KH) lie on the Cytoplasmic side of the membrane. Residues 297–319 (VRVIEPGFVFVISYLSYLTADML) traverse the membrane as a helical segment. Over 320–321 (SL) the chain is Extracellular. Residues 322-338 (SAILAITFCGICCQKYV) traverse the membrane as a helical segment. The Cytoplasmic portion of the chain corresponds to 339 to 345 (KANLCEQ). A helical transmembrane segment spans residues 346-374 (SITTVRYAMKMLASGAETIIFMFLGISAV). At 375–382 (NPTIWTWN) the chain is on the extracellular side. A helical membrane pass occupies residues 383-404 (TAFILLTLVFISVYRVIGVVIQ). Topologically, residues 405 to 417 (TWILNHYRVVQLE) are cytoplasmic. A helical membrane pass occupies residues 418-441 (IIDQVVMSYGGLRGAVAFALVVLL). Residues 442–448 (DSNYVGE) are Extracellular-facing. A helical transmembrane segment spans residues 449-482 (RRLFVSTTIIVVYFTVIFQGLTIKPLVKWLKVKR). The Cytoplasmic portion of the chain corresponds to 483-832 (SQHKEPLLNE…PLSFLPESSM (350 aa)). Positions 512, 513, and 515 each coordinate a 1,2-diacyl-sn-glycero-3-phospho-(1D-myo-inositol). Positions 740–760 (TPASNDADETGTGIDNPSFSN) are disordered.

Belongs to the monovalent cation:proton antiporter 1 (CPA1) transporter (TC 2.A.36) family. In terms of assembly, homodimer. In terms of tissue distribution, detected in early distal renal tubules in the kidney bundle zone, in proximal and late distal tubules in the kidney sinus zone, in absorptive epithelial cells of the intestine and in rectal epithelium (at protein level). Isoform 1 is expressed strongly in the gills, at intermediate levels in the kidney, spleen, rectum, spiral intestine and skin, and weakly in the brain, blood and rectal gland. Isoform 2 is expressed strongly in the kidney, rectum and spiral intestine, and weakly in muscles and the rectal gland.

The protein localises to the apical cell membrane. It localises to the cell membrane. Its subcellular location is the recycling endosome membrane. It is found in the early endosome membrane. It carries out the reaction Na(+)(in) + H(+)(out) = Na(+)(out) + H(+)(in). Its activity is regulated as follows. Seems to switch between active and inactive modes in response to various stimuli. Activated directly or indirectly by membrane phosphatidylinositol (PIs). Regulated by a variety of auxiliary proteins, which facilitate the maturation, cell surface expression and function of the transporter. Inhibited specifically by the drug tenapanor. Its function is as follows. Plasma membrane Na(+)/H(+) antiporter. Exchanges intracellular H(+) ions for extracellular Na(+) in 1:1 stoichiometry, playing a key role in salt and fluid absorption and pH homeostasis. Major apical Na(+)/H(+) exchanger in kidney and intestine playing an important role in renal and intestine Na(+) absorption and blood pressure regulation. The sequence is that of Sodium/hydrogen exchanger 3 from Triakis scyllium (Banded houndshark).